The following is an 84-amino-acid chain: Putative membrane protein insertion efficiency factor (84 aa).

This sequence belongs to the UPF0161 family.

It is found in the cell inner membrane. In terms of biological role, could be involved in insertion of integral membrane proteins into the membrane. The polypeptide is Putative membrane protein insertion efficiency factor (Shewanella oneidensis (strain ATCC 700550 / JCM 31522 / CIP 106686 / LMG 19005 / NCIMB 14063 / MR-1)).